A 316-amino-acid chain; its full sequence is BTB/POZ domain-containing protein Y57A10B.3 (316 aa).

The signal sequence occupies residues Met1–Gly21. Asn91, Asn107, Asn118, Asn133, Asn191, and Asn260 each carry an N-linked (GlcNAc...) asparagine glycan. In terms of domain architecture, BTB spans Arg158 to Asp226.

It localises to the secreted. This is BTB/POZ domain-containing protein Y57A10B.3 (btb-14) from Caenorhabditis elegans.